A 242-amino-acid chain; its full sequence is Anthranilate phosphoribosyltransferase (242 aa).

5-phospho-alpha-D-ribose 1-diphosphate contacts are provided by residues Gly-79, 82–83 (GD), Thr-87, 89–92 (NVST), 107–115 (KHGNRAVSS), and Ser-119. Gly-79 is an anthranilate binding site. Ser-91 contacts Mg(2+). Asn-110 is an anthranilate binding site. Arg-165 contributes to the anthranilate binding site. Mg(2+) is bound by residues Asp-224 and Glu-225.

It belongs to the anthranilate phosphoribosyltransferase family. Homodimer. The cofactor is Mg(2+).

It catalyses the reaction N-(5-phospho-beta-D-ribosyl)anthranilate + diphosphate = 5-phospho-alpha-D-ribose 1-diphosphate + anthranilate. It participates in amino-acid biosynthesis; L-tryptophan biosynthesis; L-tryptophan from chorismate: step 2/5. Its function is as follows. Catalyzes the transfer of the phosphoribosyl group of 5-phosphorylribose-1-pyrophosphate (PRPP) to anthranilate to yield N-(5'-phosphoribosyl)-anthranilate (PRA). The sequence is that of Anthranilate phosphoribosyltransferase (trpD) from Bacillus caldotenax.